Here is a 239-residue protein sequence, read N- to C-terminus: Purine nucleoside phosphorylase DeoD-type (239 aa).

An a purine D-ribonucleoside-binding site is contributed by His-5. Phosphate-binding positions include Gly-21, Arg-25, Arg-44, and 88–91; that span reads RVGS. A purine D-ribonucleoside-binding positions include 180–182 and 204–205; these read EME and SD. The active-site Proton donor is Asp-205.

Belongs to the PNP/UDP phosphorylase family. Homohexamer; trimer of homodimers.

The enzyme catalyses a purine D-ribonucleoside + phosphate = a purine nucleobase + alpha-D-ribose 1-phosphate. It carries out the reaction a purine 2'-deoxy-D-ribonucleoside + phosphate = a purine nucleobase + 2-deoxy-alpha-D-ribose 1-phosphate. Functionally, catalyzes the reversible phosphorolytic breakdown of the N-glycosidic bond in the beta-(deoxy)ribonucleoside molecules, with the formation of the corresponding free purine bases and pentose-1-phosphate. The protein is Purine nucleoside phosphorylase DeoD-type of Salmonella choleraesuis (strain SC-B67).